The chain runs to 210 residues: Small ribosomal subunit protein uS3 (210 aa).

One can recognise a KH type-2 domain in the interval Ile17–Lys86.

It belongs to the universal ribosomal protein uS3 family. As to quaternary structure, part of the 30S ribosomal subunit.

Its function is as follows. Binds the lower part of the 30S subunit head. The chain is Small ribosomal subunit protein uS3 from Pyrococcus horikoshii (strain ATCC 700860 / DSM 12428 / JCM 9974 / NBRC 100139 / OT-3).